Consider the following 204-residue polypeptide: Peptide deformylase (204 aa).

Residues Cys-131 and His-174 each contribute to the Fe cation site. Residue Glu-175 is part of the active site. His-178 contributes to the Fe cation binding site.

This sequence belongs to the polypeptide deformylase family. It depends on Fe(2+) as a cofactor.

It catalyses the reaction N-terminal N-formyl-L-methionyl-[peptide] + H2O = N-terminal L-methionyl-[peptide] + formate. In terms of biological role, removes the formyl group from the N-terminal Met of newly synthesized proteins. Requires at least a dipeptide for an efficient rate of reaction. N-terminal L-methionine is a prerequisite for activity but the enzyme has broad specificity at other positions. This is Peptide deformylase from Streptococcus pyogenes serotype M1.